The sequence spans 355 residues: DNA-directed RNA polymerase subunit alpha (355 aa).

An alpha N-terminal domain (alpha-NTD) region spans residues 1 to 248 (MYYNNDVSLC…EQLQPFISSD (248 aa)). The alpha C-terminal domain (alpha-CTD) stretch occupies residues 267–355 (YDPVLLRKVD…ELAKQHTDED (89 aa)).

The protein belongs to the RNA polymerase alpha chain family. Homodimer. The RNAP catalytic core consists of 2 alpha, 1 beta, 1 beta' and 1 omega subunit. When a sigma factor is associated with the core the holoenzyme is formed, which can initiate transcription.

The catalysed reaction is RNA(n) + a ribonucleoside 5'-triphosphate = RNA(n+1) + diphosphate. In terms of biological role, DNA-dependent RNA polymerase catalyzes the transcription of DNA into RNA using the four ribonucleoside triphosphates as substrates. The polypeptide is DNA-directed RNA polymerase subunit alpha (Wolbachia pipientis wMel).